A 437-amino-acid polypeptide reads, in one-letter code: Mannan endo-1,4-beta-mannosidase A (437 aa).

Residues 1-19 (MMMLSKSLLSAATAASALA) form the signal peptide. A propeptide spanning residues 20-27 (AVLQPVPR) is cleaved from the precursor. The catalytic stretch occupies residues 28 to 376 (ASSFVTISGT…VDAINGGTTT (349 aa)). A disulfide bridge links Cys53 with Cys56. N-linked (GlcNAc...) asparagine glycosylation is found at Asn157 and Asn184. Glu196 (proton donor/acceptor) is an active-site residue. Substrate is bound at residue 196–198 (EPR). An intrachain disulfide couples Cys199 to Cys202. Glu232 and Trp274 together coordinate substrate. Residue Asn277 is glycosylated (N-linked (GlcNAc...) asparagine). Cys292 and Cys299 are disulfide-bonded. Glu303 functions as the Nucleophile in the catalytic mechanism. Cysteines 311 and 361 form a disulfide. Residue Asn355 is glycosylated (N-linked (GlcNAc...) asparagine). Positions 372–399 (GGTTTPPPVSSTTTTSSRTSSTPPPPGG) are disordered. The interval 377–399 (PPPVSSTTTTSSRTSSTPPPPGG) is linker. A compositionally biased stretch (low complexity) spans 381 to 392 (SSTTTTSSRTSS). The region spanning 400–435 (SCSPLYGQCGGSGYTGPTCCAQGTCIYSNYWYSQCL) is the CBM1 domain.

This sequence belongs to the glycosyl hydrolase 5 (cellulase A) family. Monomer.

It is found in the secreted. The enzyme catalyses Random hydrolysis of (1-&gt;4)-beta-D-mannosidic linkages in mannans, galactomannans and glucomannans.. Endo-1,4-mannanase that catalyzes the random hydrolysis of (1-&gt;4)-beta-D-mannosidic linkages in mannans and heteromannans. It is a crucial enzyme for depolymerization of seed galactomannans and wood galactoglucomannans. Active against locust bean gum and ivory nut mannan, releasing mainly tri- and disaccharides. Also has transglycosylation activity. Transglycosylation of two mannotrioses into a mannohexaose is the major transglycosylation route. This is Mannan endo-1,4-beta-mannosidase A from Hypocrea jecorina (strain ATCC 56765 / BCRC 32924 / NRRL 11460 / Rut C-30) (Trichoderma reesei).